A 115-amino-acid polypeptide reads, in one-letter code: MRVKGGPTTRRRRKKWLNQAEGTFGTRHASYKVAKQTVIKSAKYAFRDRKNKKREFRALWIQRLNGALRELGVTYSVFINLLKKQQITINRKMLSEIAIHDHEAFKKLVKEVTGK.

Belongs to the bacterial ribosomal protein bL20 family.

Binds directly to 23S ribosomal RNA and is necessary for the in vitro assembly process of the 50S ribosomal subunit. It is not involved in the protein synthesizing functions of that subunit. This Mycoplasmoides gallisepticum (strain R(low / passage 15 / clone 2)) (Mycoplasma gallisepticum) protein is Large ribosomal subunit protein bL20.